The primary structure comprises 181 residues: Protein Syd (181 aa).

It belongs to the Syd family.

The protein localises to the cell inner membrane. Interacts with the SecY protein in vivo. May bind preferentially to an uncomplexed state of SecY, thus functioning either as a chelating agent for excess SecY in the cell or as a regulatory factor that negatively controls the translocase function. This chain is Protein Syd, found in Escherichia fergusonii (strain ATCC 35469 / DSM 13698 / CCUG 18766 / IAM 14443 / JCM 21226 / LMG 7866 / NBRC 102419 / NCTC 12128 / CDC 0568-73).